The chain runs to 79 residues: Scutelatoxin (79 aa).

An N-terminal signal peptide occupies residues 1–21 (MKTLLLTLVVMTIMCLDLGYT). 4 cysteine pairs are disulfide-bonded: cysteine 24–cysteine 41, cysteine 34–cysteine 59, cysteine 63–cysteine 71, and cysteine 72–cysteine 77.

It belongs to the three-finger toxin family. Short-chain subfamily. Expressed by the venom gland.

The protein localises to the secreted. This is Scutelatoxin from Oxyuranus scutellatus scutellatus (Australian taipan).